The following is a 332-amino-acid chain: Phosphate acyltransferase (332 aa).

The protein belongs to the PlsX family. Homodimer. Probably interacts with PlsY.

The protein localises to the cytoplasm. It catalyses the reaction a fatty acyl-[ACP] + phosphate = an acyl phosphate + holo-[ACP]. It participates in lipid metabolism; phospholipid metabolism. Catalyzes the reversible formation of acyl-phosphate (acyl-PO(4)) from acyl-[acyl-carrier-protein] (acyl-ACP). This enzyme utilizes acyl-ACP as fatty acyl donor, but not acyl-CoA. This chain is Phosphate acyltransferase, found in Streptococcus sanguinis (strain SK36).